Consider the following 124-residue polypeptide: Small ribosomal subunit protein uS12 (124 aa).

The disordered stretch occupies residues 1–32 (MPTINQLVRKGRRDKTAKVKTAALKGSPQRRG). At Asp89 the chain carries 3-methylthioaspartic acid. The interval 104-124 (TQGVKGRKQARSRYGAKKEKS) is disordered. Residues 108–118 (KGRKQARSRYG) show a composition bias toward basic residues.

Belongs to the universal ribosomal protein uS12 family. As to quaternary structure, part of the 30S ribosomal subunit. Contacts proteins S8 and S17. May interact with IF1 in the 30S initiation complex.

Functionally, with S4 and S5 plays an important role in translational accuracy. Its function is as follows. Interacts with and stabilizes bases of the 16S rRNA that are involved in tRNA selection in the A site and with the mRNA backbone. Located at the interface of the 30S and 50S subunits, it traverses the body of the 30S subunit contacting proteins on the other side and probably holding the rRNA structure together. The combined cluster of proteins S8, S12 and S17 appears to hold together the shoulder and platform of the 30S subunit. In Rhodococcus erythropolis (strain PR4 / NBRC 100887), this protein is Small ribosomal subunit protein uS12.